Reading from the N-terminus, the 2378-residue chain is Dimodular nonribosomal peptide synthase (2378 aa).

Carrier domains follow at residues 961–1036 (APRT…DLAQ) and 2036–2111 (GPRT…EMGS). Serine 996 and serine 2071 each carry O-(pantetheine 4'-phosphoryl)serine.

It belongs to the ATP-dependent AMP-binding enzyme family. Pantetheine 4'-phosphate serves as cofactor.

It catalyses the reaction holo-[peptidyl-carrier protein] + L-threonine + ATP = L-threonyl-[peptidyl-carrier protein] + AMP + diphosphate. The enzyme catalyses holo-[peptidyl-carrier protein] + glycine + ATP = glycyl-[peptidyl-carrier protein] + AMP + diphosphate. Its pathway is siderophore biosynthesis; bacillibactin biosynthesis. Functionally, specifically adenylates L-threonine and, to a lesser extent, glycine and covalently loads both amino acids onto their corresponding peptidyl carrier domains. This Bacillus subtilis (strain 168) protein is Dimodular nonribosomal peptide synthase (dhbF).